Consider the following 69-residue polypeptide: Large ribosomal subunit protein bL28 (69 aa).

This sequence belongs to the bacterial ribosomal protein bL28 family.

This is Large ribosomal subunit protein bL28 from Aquifex aeolicus (strain VF5).